The chain runs to 476 residues: S-adenosylmethionine-dependent nucleotide dehydratase (476 aa).

The segment at 1–168 (MKTKITLSGF…LTANEVADLI (168 aa)) is cytidylate kinase-like domain. 9–17 (GFAGTGKST) contributes to the ATP binding site. The Radical SAM core domain occupies 176 to 400 (NAVSKIPSVN…HKDVETIVPE (225 aa)). The segment at 183–476 (SVNFHLWQPC…DLRKEEVSYE (294 aa)) is prokaryotic viperin domain. [4Fe-4S] cluster is bound by residues cysteine 192, cysteine 196, and cysteine 199.

The protein in the N-terminal section; belongs to the cytidylate kinase-like family. In the C-terminal section; belongs to the radical SAM superfamily. Viperin family. Requires [4Fe-4S] cluster as cofactor.

It catalyses the reaction GTP + AH2 + S-adenosyl-L-methionine = 3'-deoxy-3',4'-didehydro-GTP + 5'-deoxyadenosine + L-methionine + A + H2O + H(+). In terms of biological role, expression of pVip60 in E.coli (strain MG1655) confers resistance to phage T7; prevents culture collapse upon infection. Catalyzes the conversion of guanosine triphosphate (GTP) to 3'-deoxy-3',4'-didehydro-GTP (ddhGTP), probably via a SAM-dependent radical mechanism. The modified nucleotide represses transcription from T7 RNA polymerase-directed genes (possibly by acting as chain terminators), strongly suggesting these nucleotides block viral polymerase transcription. The N-terminus of the protein may generate NTP for use by the viperin domain. This chain is S-adenosylmethionine-dependent nucleotide dehydratase, found in Lacinutrix mariniflava (strain JCM 13824 / KCCM 42306 / AKS432).